The sequence spans 485 residues: Glutamyl-tRNA(Gln) amidotransferase subunit A (485 aa).

Residues Lys-75 and Ser-150 each act as charge relay system in the active site. Ser-174 acts as the Acyl-ester intermediate in catalysis.

This sequence belongs to the amidase family. GatA subfamily. Heterotrimer of A, B and C subunits.

It carries out the reaction L-glutamyl-tRNA(Gln) + L-glutamine + ATP + H2O = L-glutaminyl-tRNA(Gln) + L-glutamate + ADP + phosphate + H(+). Its function is as follows. Allows the formation of correctly charged Gln-tRNA(Gln) through the transamidation of misacylated Glu-tRNA(Gln) in organisms which lack glutaminyl-tRNA synthetase. The reaction takes place in the presence of glutamine and ATP through an activated gamma-phospho-Glu-tRNA(Gln). This is Glutamyl-tRNA(Gln) amidotransferase subunit A from Trichodesmium erythraeum (strain IMS101).